Consider the following 96-residue polypeptide: Large ribosomal subunit protein bL28 (96 aa).

Positions 1–22 are enriched in polar residues; the sequence is MSRSCELTGKGVQSGNNVSHAN. The tract at residues 1–24 is disordered; that stretch reads MSRSCELTGKGVQSGNNVSHANNK.

This sequence belongs to the bacterial ribosomal protein bL28 family.

This chain is Large ribosomal subunit protein bL28, found in Rhizobium meliloti (strain 1021) (Ensifer meliloti).